A 183-amino-acid polypeptide reads, in one-letter code: Probable chemoreceptor glutamine deamidase CheD (183 aa).

Belongs to the CheD family.

It carries out the reaction L-glutaminyl-[protein] + H2O = L-glutamyl-[protein] + NH4(+). Its function is as follows. Probably deamidates glutamine residues to glutamate on methyl-accepting chemotaxis receptors (MCPs), playing an important role in chemotaxis. This is Probable chemoreceptor glutamine deamidase CheD from Zymomonas mobilis subsp. mobilis (strain ATCC 31821 / ZM4 / CP4).